A 291-amino-acid chain; its full sequence is ATP phosphoribosyltransferase (291 aa).

It belongs to the ATP phosphoribosyltransferase family. Long subfamily. It depends on Mg(2+) as a cofactor.

It localises to the cytoplasm. It carries out the reaction 1-(5-phospho-beta-D-ribosyl)-ATP + diphosphate = 5-phospho-alpha-D-ribose 1-diphosphate + ATP. The protein operates within amino-acid biosynthesis; L-histidine biosynthesis; L-histidine from 5-phospho-alpha-D-ribose 1-diphosphate: step 1/9. With respect to regulation, feedback inhibited by histidine. Catalyzes the condensation of ATP and 5-phosphoribose 1-diphosphate to form N'-(5'-phosphoribosyl)-ATP (PR-ATP). Has a crucial role in the pathway because the rate of histidine biosynthesis seems to be controlled primarily by regulation of HisG enzymatic activity. The sequence is that of ATP phosphoribosyltransferase from Geotalea uraniireducens (strain Rf4) (Geobacter uraniireducens).